A 340-amino-acid polypeptide reads, in one-letter code: TD and POZ domain-containing protein 5 (340 aa).

One can recognise an MATH domain in the interval glutamate 19–valine 149. Positions threonine 188 to glutamine 255 constitute a BTB domain.

It belongs to the Tdpoz family.

The protein is TD and POZ domain-containing protein 5 of Mus musculus (Mouse).